Reading from the N-terminus, the 203-residue chain is Glycerol-3-phosphate acyltransferase (203 aa).

4 helical membrane passes run 6–26, 82–102, 118–138, and 141–161; these read LTLLMIVSAYLAGSISSAVLV, AISLGLIAIAACLGHIYPIFF, APIGDDLAICLMASWVVLLLI, and YSSLAAIITALLAPLYTWWLD.

This sequence belongs to the PlsY family. As to quaternary structure, probably interacts with PlsX.

It is found in the cell inner membrane. The catalysed reaction is an acyl phosphate + sn-glycerol 3-phosphate = a 1-acyl-sn-glycero-3-phosphate + phosphate. The protein operates within lipid metabolism; phospholipid metabolism. In terms of biological role, catalyzes the transfer of an acyl group from acyl-phosphate (acyl-PO(4)) to glycerol-3-phosphate (G3P) to form lysophosphatidic acid (LPA). This enzyme utilizes acyl-phosphate as fatty acyl donor, but not acyl-CoA or acyl-ACP. The chain is Glycerol-3-phosphate acyltransferase from Shewanella putrefaciens (strain CN-32 / ATCC BAA-453).